The following is a 442-amino-acid chain: tRNA(Ile)-lysidine synthase (442 aa).

27-32 (SGGLDS) is a binding site for ATP.

This sequence belongs to the tRNA(Ile)-lysidine synthase family.

It is found in the cytoplasm. The enzyme catalyses cytidine(34) in tRNA(Ile2) + L-lysine + ATP = lysidine(34) in tRNA(Ile2) + AMP + diphosphate + H(+). Its function is as follows. Ligates lysine onto the cytidine present at position 34 of the AUA codon-specific tRNA(Ile) that contains the anticodon CAU, in an ATP-dependent manner. Cytidine is converted to lysidine, thus changing the amino acid specificity of the tRNA from methionine to isoleucine. This Photorhabdus laumondii subsp. laumondii (strain DSM 15139 / CIP 105565 / TT01) (Photorhabdus luminescens subsp. laumondii) protein is tRNA(Ile)-lysidine synthase.